The sequence spans 87 residues: Putative acyl-CoA-binding protein (87 aa).

The region spanning 1–86 is the ACB domain; the sequence is MSSTFEQAAA…VDELKTKYGM (86 aa). An acyl-CoA contacts are provided by residues Lys-13, 28–32, Lys-50, Lys-54, and Tyr-73; that span reads YALFK.

This sequence belongs to the ACBP family.

The protein resides in the cytoplasm. The protein localises to the nucleus. Binds medium- and long-chain acyl-CoA esters with very high affinity and may function as an intracellular carrier of acyl-CoA esters. May enhance the activity of the ceramide synthase complex. The chain is Putative acyl-CoA-binding protein from Schizosaccharomyces pombe (strain 972 / ATCC 24843) (Fission yeast).